A 315-amino-acid polypeptide reads, in one-letter code: Glycerol-3-phosphate dehydrogenase [NAD(P)+] (315 aa).

Positions 24, 44, 45, and 92 each coordinate NADPH. Sn-glycerol 3-phosphate is bound by residues Lys-92 and Gly-120. NADPH is bound at residue Ser-124. Lys-175, Asp-228, Ser-238, Arg-239, and Asn-240 together coordinate sn-glycerol 3-phosphate. Catalysis depends on Lys-175, which acts as the Proton acceptor. Residue Arg-239 coordinates NADPH. NADPH is bound at residue Glu-265.

Belongs to the NAD-dependent glycerol-3-phosphate dehydrogenase family.

The protein resides in the cytoplasm. It catalyses the reaction sn-glycerol 3-phosphate + NAD(+) = dihydroxyacetone phosphate + NADH + H(+). The catalysed reaction is sn-glycerol 3-phosphate + NADP(+) = dihydroxyacetone phosphate + NADPH + H(+). It functions in the pathway membrane lipid metabolism; glycerophospholipid metabolism. Catalyzes the reduction of the glycolytic intermediate dihydroxyacetone phosphate (DHAP) to sn-glycerol 3-phosphate (G3P), the key precursor for phospholipid synthesis. This is Glycerol-3-phosphate dehydrogenase [NAD(P)+] from Synechococcus sp. (strain JA-2-3B'a(2-13)) (Cyanobacteria bacterium Yellowstone B-Prime).